Here is a 379-residue protein sequence, read N- to C-terminus: Transcription factor bHLH122 (379 aa).

Positions 1–17 (MESEFQQHHFLLHDHQH) are enriched in basic and acidic residues. Residues 1 to 21 (MESEFQQHHFLLHDHQHQRPR) form a disordered region. Residue Ser-74 is modified to Phosphoserine. Disordered regions lie at residues 79 to 98 (TFNS…EDED), 133 to 156 (SVSR…ARHN), and 190 to 286 (TSNT…MSLP). The span at 84–93 (GTEKKPPEVK) shows a compositional bias: basic and acidic residues. Residues 190-200 (TSNTEASSLTP) are compositionally biased toward polar residues. Residues Ser-213 and Ser-234 each carry the phosphoserine modification. A compositionally biased stretch (polar residues) spans 235–261 (GGFNRSFGNEGSASSKLTALARTQSGG). Basic and acidic residues predominate over residues 265-274 (YKTKDEDSAS). The bHLH domain occupies 310–360 (CATHPRSIAERVRRTKISERMRKLQDLVPNMDTQTNTADMLDLAVQYIKDL).

Homodimer.

It localises to the nucleus. The polypeptide is Transcription factor bHLH122 (BHLH122) (Arabidopsis thaliana (Mouse-ear cress)).